Reading from the N-terminus, the 296-residue chain is MSLLANRRFLKMHGAGNAIVVLDLRGTAVRVTPAEARAIAADVHSRFDQLMVVHDPVTPGTDAFMRIYNTDGSESGACGNGTRCVGYALLDDPAMARPAENGALTLETKAGLVAVKRITERSFTVDMGQPRLRWDEIPLAEPFLDTRRIELQVGPIDDPILHSPAAVSMGNPHAIFFVERDPDSYDLGRIGPLLEAHPIFPERANISIAEVTGRDTIKLRVWERGAGLTLACGTAACATVVAASRLRMIGRAARVALPGGELSIEWRADDHVLMTGPVYLEGEGTFSPDLFAGIDG.

N17, Q49, and N69 together coordinate substrate. C78 functions as the Proton donor in the catalytic mechanism. Substrate is bound by residues 79 to 80, N171, N205, and 223 to 224; these read GN and ER. The Proton acceptor role is filled by C232. 233-234 serves as a coordination point for substrate; the sequence is GT.

Belongs to the diaminopimelate epimerase family. Homodimer.

It is found in the cytoplasm. It catalyses the reaction (2S,6S)-2,6-diaminopimelate = meso-2,6-diaminopimelate. Its pathway is amino-acid biosynthesis; L-lysine biosynthesis via DAP pathway; DL-2,6-diaminopimelate from LL-2,6-diaminopimelate: step 1/1. Functionally, catalyzes the stereoinversion of LL-2,6-diaminopimelate (L,L-DAP) to meso-diaminopimelate (meso-DAP), a precursor of L-lysine and an essential component of the bacterial peptidoglycan. This Methylorubrum extorquens (strain PA1) (Methylobacterium extorquens) protein is Diaminopimelate epimerase.